Here is a 1118-residue protein sequence, read N- to C-terminus: Cytospin-A (1118 aa).

Disordered stretches follow at residues 1 to 157 (MKKS…DGQI) and 198 to 221 (GGKELQEGPEEEEEEEEEEKPHVS). Composition is skewed to polar residues over residues 57-102 (NPTS…TKET) and 112-123 (SRASANKKQSAA). Residues 144 to 153 (SESRMSKSKS) show a composition bias toward basic and acidic residues. Residues 204-215 (EGPEEEEEEEEE) show a composition bias toward acidic residues. The stretch at 225–264 (AADVESTLILLQEQNQAIREELNLLKSENRMLKDRLNALG) forms a coiled coil. The disordered stretch occupies residues 289–379 (AGSGQSDGGG…RRGSSGNASE (91 aa)). Residues 343 to 363 (SSDDALDAPSGASSSSESECA) are compositionally biased toward low complexity. Coiled-coil stretches lie at residues 384–438 (CLTE…MDSL) and 475–796 (GRYM…RGRV). Disordered stretches follow at residues 771–790 (QEKNEKLSKELEEVKSRKQD), 837–876 (FDSASQGPPSNGASVTPTVSAAPLPRTPLSPSPMKTPPAA), and 920–1001 (SAAS…ERKD). Residues 838 to 855 (DSASQGPPSNGASVTPTV) are compositionally biased toward polar residues. Over residues 861–872 (PRTPLSPSPMKT) the composition is skewed to pro residues. Polar residues predominate over residues 930-945 (QRVSNMDSTKTISVSR). The segment covering 946–956 (RSSEEMKRDMS) has biased composition (basic and acidic residues). Residues 961–986 (ASSTSLMAMSAASAPLSLSSSSPTAS) are compositionally biased toward low complexity. The Calponin-homology (CH) domain occupies 1012–1117 (GSKRNALLKW…YVTAIYKYFE (106 aa)).

The protein belongs to the cytospin-A family. As to quaternary structure, may interact with both microtubules and actin cytoskeleton.

Its subcellular location is the cytoplasm. The protein localises to the cytoskeleton. It localises to the spindle. The protein resides in the cell junction. It is found in the gap junction. Functionally, involved in cytokinesis and spindle organization. May play a role in actin cytoskeleton organization and microtubule stabilization and hence required for proper cell adhesion and migration. The polypeptide is Cytospin-A (specc1l) (Takifugu rubripes (Japanese pufferfish)).